Here is a 106-residue protein sequence, read N- to C-terminus: Putative toxin Rv3098A/RVBD_3098A (106 aa).

Belongs to the PemK/MazF family. In terms of assembly, forms a complex with cognate antitoxin Rv3098B/RVBD_3098B.

Its function is as follows. Putative toxic component of a possible type II toxin-antitoxin (TA) system. Its toxic effect may be neutralized by cognate antitoxin Rv3098B/RVBD_3098B. In Mycobacterium tuberculosis (strain ATCC 25618 / H37Rv), this protein is Putative toxin Rv3098A/RVBD_3098A.